The primary structure comprises 531 residues: RCC1 and BTB domain-containing protein 1 (531 aa).

6 RCC1 repeats span residues 40–91, 93–145, 147–198, 199–250, 252–302, and 304–356; these read NDEV…LLST, DGVV…ALAA, GEVF…AVLD, NGEV…ALTD, GLLY…AAKT, and GGHV…FLTV. 2 BTB domains span residues 370–437 and 470–499; these read ADLK…DLPP and ENAFSLFSAAVRYDAEDLEEFCFKFCINHL.

In terms of tissue distribution, ubiquitously expressed. In the retina, present in the nerve fiber layer and to a lesser extent in the inner and outer plexiform layers (at protein level).

The protein resides in the nucleus. Functionally, may be involved in cell cycle regulation by chromatin remodeling. The polypeptide is RCC1 and BTB domain-containing protein 1 (RCBTB1) (Homo sapiens (Human)).